The sequence spans 194 residues: Imidazoleglycerol-phosphate dehydratase (194 aa).

The protein belongs to the imidazoleglycerol-phosphate dehydratase family.

Its subcellular location is the cytoplasm. It catalyses the reaction D-erythro-1-(imidazol-4-yl)glycerol 3-phosphate = 3-(imidazol-4-yl)-2-oxopropyl phosphate + H2O. It functions in the pathway amino-acid biosynthesis; L-histidine biosynthesis; L-histidine from 5-phospho-alpha-D-ribose 1-diphosphate: step 6/9. The polypeptide is Imidazoleglycerol-phosphate dehydratase (Chlorobaculum tepidum (strain ATCC 49652 / DSM 12025 / NBRC 103806 / TLS) (Chlorobium tepidum)).